The sequence spans 786 residues: Probable aminopeptidase 1 (786 aa).

Substrate contacts are provided by residues Glu103 and 235 to 239 (GAMEN). His270 is a Zn(2+) binding site. The Proton acceptor role is filled by Glu271. 2 residues coordinate Zn(2+): His274 and Glu293.

Belongs to the peptidase M1 family. Zn(2+) serves as cofactor.

The protein localises to the cytoplasm. The polypeptide is Probable aminopeptidase 1 (ape1) (Sulfurisphaera tokodaii (strain DSM 16993 / JCM 10545 / NBRC 100140 / 7) (Sulfolobus tokodaii)).